Here is a 183-residue protein sequence, read N- to C-terminus: MSTERAIFAGGCFWCMVEPFEERPGILAVTSGYTGGHIEYPTYDQVLSKASGHTEAVEILFDNELISYDELLDIYWSLIDPTDADGQIYDRGANYRPVIFVESEEQRIAAQKSKIALEKSGIWDKPIVVPIEEAKTFWPAEEYHQQYYKKDPKRYQAMHKARERYLALQRFKGKFKFLRKNTR.

Residue cysteine 12 is part of the active site.

This sequence belongs to the MsrA Met sulfoxide reductase family.

It catalyses the reaction L-methionyl-[protein] + [thioredoxin]-disulfide + H2O = L-methionyl-(S)-S-oxide-[protein] + [thioredoxin]-dithiol. The catalysed reaction is [thioredoxin]-disulfide + L-methionine + H2O = L-methionine (S)-S-oxide + [thioredoxin]-dithiol. Has an important function as a repair enzyme for proteins that have been inactivated by oxidation. Catalyzes the reversible oxidation-reduction of methionine sulfoxide in proteins to methionine. The polypeptide is Peptide methionine sulfoxide reductase MsrA 1 (msrA1) (Lactococcus lactis subsp. lactis (strain IL1403) (Streptococcus lactis)).